We begin with the raw amino-acid sequence, 66 residues long: Large ribosomal subunit protein bL35 (66 aa).

Belongs to the bacterial ribosomal protein bL35 family.

In Borrelia garinii subsp. bavariensis (strain ATCC BAA-2496 / DSM 23469 / PBi) (Borreliella bavariensis), this protein is Large ribosomal subunit protein bL35.